The chain runs to 192 residues: Segregation and condensation protein B (192 aa).

Belongs to the ScpB family. In terms of assembly, homodimer. Homodimerization may be required to stabilize the binding of ScpA to the Smc head domains. Component of a cohesin-like complex composed of ScpA, ScpB and the Smc homodimer, in which ScpA and ScpB bind to the head domain of Smc. The presence of the three proteins is required for the association of the complex with DNA.

Its subcellular location is the cytoplasm. In terms of biological role, participates in chromosomal partition during cell division. May act via the formation of a condensin-like complex containing Smc and ScpA that pull DNA away from mid-cell into both cell halves. This chain is Segregation and condensation protein B, found in Mycoplasma mobile (strain ATCC 43663 / 163K / NCTC 11711) (Mesomycoplasma mobile).